An 82-amino-acid polypeptide reads, in one-letter code: Putative membrane protein insertion efficiency factor (82 aa).

This sequence belongs to the UPF0161 family.

Its subcellular location is the cell inner membrane. Could be involved in insertion of integral membrane proteins into the membrane. The chain is Putative membrane protein insertion efficiency factor from Synechococcus elongatus (strain ATCC 33912 / PCC 7942 / FACHB-805) (Anacystis nidulans R2).